Here is a 393-residue protein sequence, read N- to C-terminus: Pinosylvin synthase (393 aa).

57–60 (KFKR) is a binding site for substrate. Cysteine 167 is a catalytic residue. Substrate-binding positions include leucine 270 and 308 to 310 (GGR).

The protein belongs to the thiolase-like superfamily. Chalcone/stilbene synthases family. As to quaternary structure, homodimer.

The protein resides in the cytoplasm. It carries out the reaction (E)-cinnamoyl-CoA + 3 malonyl-CoA + 3 H(+) = (E)-pinosylvin + 4 CO2 + 4 CoA. The catalysed reaction is 3-phenylpropanoyl-CoA + 3 malonyl-CoA + 3 H(+) = dihydropinosylvin + 4 CO2 + 4 CoA. It participates in phytoalexin biosynthesis; hydropinosylvin biosynthesis. In terms of biological role, catalyzes the production of pinosylvin from cinnamoyl-CoA and malonyl-CoA, and dihydropinosylvin from dihydrocinnamoyl-CoA. In Pinus sylvestris (Scotch pine), this protein is Pinosylvin synthase.